Consider the following 260-residue polypeptide: Hydroxyethylthiazole kinase (260 aa).

Residue M38 coordinates substrate. 2 residues coordinate ATP: R114 and T159. Residue G186 participates in substrate binding.

The protein belongs to the Thz kinase family. Mg(2+) serves as cofactor.

It carries out the reaction 5-(2-hydroxyethyl)-4-methylthiazole + ATP = 4-methyl-5-(2-phosphooxyethyl)-thiazole + ADP + H(+). It functions in the pathway cofactor biosynthesis; thiamine diphosphate biosynthesis; 4-methyl-5-(2-phosphoethyl)-thiazole from 5-(2-hydroxyethyl)-4-methylthiazole: step 1/1. Catalyzes the phosphorylation of the hydroxyl group of 4-methyl-5-beta-hydroxyethylthiazole (THZ). The polypeptide is Hydroxyethylthiazole kinase (Helicobacter pylori (strain G27)).